The following is a 369-amino-acid chain: Queuine tRNA-ribosyltransferase (369 aa).

D89 (proton acceptor) is an active-site residue. Substrate-binding positions include 89–93 (DSGGF), D142, Q184, and G211. The interval 242 to 248 (GGGSPEL) is RNA binding. D261 acts as the Nucleophile in catalysis. Positions 266-270 (TRIAR) are RNA binding; important for wobble base 34 recognition. C299, C301, C304, and H330 together coordinate Zn(2+).

The protein belongs to the queuine tRNA-ribosyltransferase family. As to quaternary structure, homodimer. Within each dimer, one monomer is responsible for RNA recognition and catalysis, while the other monomer binds to the replacement base PreQ1. Requires Zn(2+) as cofactor.

It catalyses the reaction 7-aminomethyl-7-carbaguanine + guanosine(34) in tRNA = 7-aminomethyl-7-carbaguanosine(34) in tRNA + guanine. It functions in the pathway tRNA modification; tRNA-queuosine biosynthesis. In terms of biological role, catalyzes the base-exchange of a guanine (G) residue with the queuine precursor 7-aminomethyl-7-deazaguanine (PreQ1) at position 34 (anticodon wobble position) in tRNAs with GU(N) anticodons (tRNA-Asp, -Asn, -His and -Tyr). Catalysis occurs through a double-displacement mechanism. The nucleophile active site attacks the C1' of nucleotide 34 to detach the guanine base from the RNA, forming a covalent enzyme-RNA intermediate. The proton acceptor active site deprotonates the incoming PreQ1, allowing a nucleophilic attack on the C1' of the ribose to form the product. After dissociation, two additional enzymatic reactions on the tRNA convert PreQ1 to queuine (Q), resulting in the hypermodified nucleoside queuosine (7-(((4,5-cis-dihydroxy-2-cyclopenten-1-yl)amino)methyl)-7-deazaguanosine). In Thermotoga sp. (strain RQ2), this protein is Queuine tRNA-ribosyltransferase.